Consider the following 494-residue polypeptide: NAD(+) hydrolase ThsA (494 aa).

A Deacetylase sirtuin-type domain is found at A11–K295. NAD(+) is bound by residues A30, D119, and H157. The Proton acceptor role is filled by H157. Residues I296–R494 form an SLOG (STALD) domain, binds 3'cADPR region. Positions 300, 301, 339, 370, 388, 405, 416, and 420 each coordinate 3'cADPR.

It belongs to the soluble Thoeris ThsA family. As to quaternary structure, homotetramer.

The protein resides in the cytoplasm. It carries out the reaction NAD(+) + H2O = ADP-D-ribose + nicotinamide + H(+). With respect to regulation, probably activated by a signal molecule generated by endogenous ThsB1 and/or ThsB2. Can also be activated by the signal generated by ThsB of B.cereus. The activating molecule might be 3' cyclic ADP-D-ribose (3'cADPR). In terms of biological role, probable NAD(+) hydrolyzing component (NADase) of the Thoeris antiviral defense system, composed of ThsA, TIR1 (thsB1) and TIR2 (thsB2). Activated by a signal molecule generated by endogenous TIR1, TIR2 or ThsB from B.cereus. After activation it binds and hydrolyzes NAD(+), leading to cell death and inhibition of phage replication. Expression of Thoeris in B.subtilis (strain BEST7003) confers resistance to phages phi29, phi3T, SPBeta, SBSphi11, SBSphi13, SBSphiJ, SPO1 and SPR but not SBSphiC. The TIR paralogs confer overlapping resistance to different phages. This is NAD(+) hydrolase ThsA from Cytobacillus dafuensis (Bacillus dafuensis).